Here is a 218-residue protein sequence, read N- to C-terminus: Adenylate kinase (218 aa).

10 to 15 (GAGKGT) contributes to the ATP binding site. The interval 30 to 59 (STGDMLRAAINEGTPLGLEAKKVMDAGKLV) is NMP. Residues Thr-31, Arg-36, 57–59 (KLV), 85–88 (GFPR), and Gln-92 each bind AMP. The segment at 122 to 159 (GRRVHPASGRTYHVLFNPPAKEGVDDITGDPLVQREDD) is LID. ATP-binding positions include Arg-123 and 132–133 (TY). The AMP site is built by Arg-156 and Arg-167. Gly-203 provides a ligand contact to ATP.

This sequence belongs to the adenylate kinase family. Monomer.

It localises to the cytoplasm. It carries out the reaction AMP + ATP = 2 ADP. The protein operates within purine metabolism; AMP biosynthesis via salvage pathway; AMP from ADP: step 1/1. In terms of biological role, catalyzes the reversible transfer of the terminal phosphate group between ATP and AMP. Plays an important role in cellular energy homeostasis and in adenine nucleotide metabolism. The sequence is that of Adenylate kinase from Chlorobium phaeobacteroides (strain BS1).